The sequence spans 1069 residues: Carbamoyl phosphate synthase large chain (1069 aa).

Positions 1-401 (MPLNKDIKKV…AFLKGIRSLE (401 aa)) are carboxyphosphate synthetic domain. Residues R129, R169, G175, G176, K208, V210, E215, G241, I242, H243, Q284, and E298 each contribute to the ATP site. The ATP-grasp 1 domain occupies 133–327 (RDMMNRIGEP…IAKLAAKIAL (195 aa)). Positions 284, 298, and 300 each coordinate Mg(2+). Q284, E298, and N300 together coordinate Mn(2+). Residues 402 to 549 (IGKYSLDHKK…YSTYEQYDEV (148 aa)) form an oligomerization domain region. The tract at residues 550–932 (EVSNRRKVIV…ALYKGFVGAN (383 aa)) is carbamoyl phosphate synthetic domain. An ATP-grasp 2 domain is found at 674–864 (DELLERLDIS…IVDIATQVMM (191 aa)). Positions 710, 749, 751, 755, 780, 781, 782, 783, 823, and 835 each coordinate ATP. Mg(2+) is bound by residues Q823, E835, and N837. Mn(2+) is bound by residues Q823, E835, and N837. Positions 932–1069 (NMYPSKEKGK…KDLEVFDITK (138 aa)) constitute an MGS-like domain. The tract at residues 933–1069 (MYPSKEKGKI…KDLEVFDITK (137 aa)) is allosteric domain.

This sequence belongs to the CarB family. Composed of two chains; the small (or glutamine) chain promotes the hydrolysis of glutamine to ammonia, which is used by the large (or ammonia) chain to synthesize carbamoyl phosphate. Tetramer of heterodimers (alpha,beta)4. Mg(2+) serves as cofactor. Mn(2+) is required as a cofactor.

The enzyme catalyses hydrogencarbonate + L-glutamine + 2 ATP + H2O = carbamoyl phosphate + L-glutamate + 2 ADP + phosphate + 2 H(+). The catalysed reaction is hydrogencarbonate + NH4(+) + 2 ATP = carbamoyl phosphate + 2 ADP + phosphate + 2 H(+). It functions in the pathway amino-acid biosynthesis; L-arginine biosynthesis; carbamoyl phosphate from bicarbonate: step 1/1. The protein operates within pyrimidine metabolism; UMP biosynthesis via de novo pathway; (S)-dihydroorotate from bicarbonate: step 1/3. In terms of biological role, large subunit of the glutamine-dependent carbamoyl phosphate synthetase (CPSase). CPSase catalyzes the formation of carbamoyl phosphate from the ammonia moiety of glutamine, carbonate, and phosphate donated by ATP, constituting the first step of 2 biosynthetic pathways, one leading to arginine and/or urea and the other to pyrimidine nucleotides. The large subunit (synthetase) binds the substrates ammonia (free or transferred from glutamine from the small subunit), hydrogencarbonate and ATP and carries out an ATP-coupled ligase reaction, activating hydrogencarbonate by forming carboxy phosphate which reacts with ammonia to form carbamoyl phosphate. This Clostridium botulinum (strain Eklund 17B / Type B) protein is Carbamoyl phosphate synthase large chain.